Consider the following 277-residue polypeptide: Probable ketoamine kinase HMPREF0351_12196 (277 aa).

84–86 (EWI) is a binding site for ATP. Asp186 acts as the Proton acceptor in catalysis.

Belongs to the fructosamine kinase family.

It carries out the reaction N(6)-(D-ribulosyl)-L-lysine + ATP = N(6)-(3-O-phospho-D-ribulosyl)-L-lysine + ADP + H(+). The enzyme catalyses N-(D-ribulosyl)-cadaverine + ATP = N-(3-O-phospho-D-ribulosyl)-cadaverine + ADP + H(+). The catalysed reaction is N(6)-(D-erythrulosyl)-L-lysine + ATP = N(6)-(3-O-phospho-D-erythrulosyl)-L-lysine + ADP + H(+). It catalyses the reaction N-(D-erythrulosyl)-cadaverine + ATP = N-(3-O-phospho-D-erythrulosyl)-cadaverine + ADP + H(+). It carries out the reaction N(6)-D-ribulosyl-L-lysyl-[protein] + ATP = N(6)-(3-O-phospho-D-ribulosyl)-L-lysyl-[protein] + ADP + H(+). The enzyme catalyses N(6)-(D-erythrulosyl)-L-lysyl-[protein] + ATP = N(6)-(3-O-phospho-D-erythrulosyl)-L-lysyl-[protein] + ADP + H(+). Ketoamine kinase that phosphorylates ketoamines, such as erythruloselysine, erythrulosecadaverine, ribuloselysine and ribulosecadaverine, on the third carbon of the sugar moiety to generate ketoamine 3-phosphate. Has higher activity on free lysine (erythruloselysine and ribuloselysine), than on ribuloselysine and erythruloselysine residues on glycated proteins. This Enterococcus faecium (strain ATCC BAA-472 / TX0016 / DO) protein is Probable ketoamine kinase HMPREF0351_12196.